A 631-amino-acid chain; its full sequence is tRNA 5-methylaminomethyl-2-thiouridine biosynthesis bifunctional protein MnmC (631 aa).

The segment at 1 to 243 is tRNA (mnm(5)s(2)U34)-methyltransferase; sequence MITDLRPPAM…KREMLTGRLP (243 aa). Residues 261 to 631 are FAD-dependent cmnm(5)s(2)U34 oxidoreductase; sequence IGAGIAGAAL…GRLYRNQLTV (371 aa).

In the N-terminal section; belongs to the methyltransferase superfamily. tRNA (mnm(5)s(2)U34)-methyltransferase family. It in the C-terminal section; belongs to the DAO family. Requires FAD as cofactor.

The protein localises to the cytoplasm. It carries out the reaction 5-aminomethyl-2-thiouridine(34) in tRNA + S-adenosyl-L-methionine = 5-methylaminomethyl-2-thiouridine(34) in tRNA + S-adenosyl-L-homocysteine + H(+). Its function is as follows. Catalyzes the last two steps in the biosynthesis of 5-methylaminomethyl-2-thiouridine (mnm(5)s(2)U) at the wobble position (U34) in tRNA. Catalyzes the FAD-dependent demodification of cmnm(5)s(2)U34 to nm(5)s(2)U34, followed by the transfer of a methyl group from S-adenosyl-L-methionine to nm(5)s(2)U34, to form mnm(5)s(2)U34. This is tRNA 5-methylaminomethyl-2-thiouridine biosynthesis bifunctional protein MnmC from Marinobacter nauticus (strain ATCC 700491 / DSM 11845 / VT8) (Marinobacter aquaeolei).